An 804-amino-acid chain; its full sequence is MAHSMSRPVAATAAALLALALPQALAQANTSYVDYNIEANPDLYPLCIETIPLSFPDCQNGPLRSHLICDETATPYDRAASLISLFTLDELIANTGNTGLGVSRLGLPAYQVWSEALHGLDRANFSDSGAYNWATSFPQPILTTAALNRTLIHQIASIISTQGRAFNNAGRYGLDVYAPNINTFRHPVWGRGQETPGEDVSLAAVYAYEYITGIQGPDPESNLKLAATAKHYAGYDIENWHNHSRLGNDMNITQQDLSEYYTPQFHVAARDAKVQSVMCAYNAVNGVPACADSYFLQTLLRDTFGFVDHGYVSSDCDAAYNIYNPHGYASSQAAAAAEAILAGTDIDCGTTYQWHLNESITAGDLSRDDIEQGVIRLYTTLVQAGYFDSNTTKANNPYRDLSWSDVLETDAWNISYQAATQGIVLLKNSNNVLPLTEKAYPPSNTTVALIGPWANATTQLLGNYYGNAPYMISPRAAFEEAGYKVNFAEGTGISSTSTSGFAAALSAAQSADVIIYAGGIDNTLEAEALDRESIAWPGNQLDLIQKLASAAGKKPLIVLQMGGGQVDSSSLKNNTKVSALLWGGYPGQSGGFALRDIITGKKNPAGRLVTTQYPASYAEEFPATDMNLRPEGDNPGQTYKWYTGEAVYEFGHGLFYTTFAESSSNTTTKEVKLNIQDILSRTHEELASITQLPVLNFTANIRNTGKLESDYTAMVFANTSDAGPAPYPKKWLVGWDRLGEVKVGETRELRVPVEVGSFARVNEDGDWVLFPGTFELALNLERKVRVKVVLEGEEEVVLKWPGKE.

An N-terminal signal peptide occupies residues 1–26 (MAHSMSRPVAATAAALLALALPQALA). 5 N-linked (GlcNAc...) asparagine glycosylation sites follow: N29, N124, N148, N242, and N251. D315 is a catalytic residue. 9 N-linked (GlcNAc...) asparagine glycosylation sites follow: N357, N390, N413, N444, N455, N573, N665, N696, and N718.

It belongs to the glycosyl hydrolase 3 family.

The protein resides in the secreted. The enzyme catalyses Hydrolysis of (1-&gt;4)-beta-D-xylans, to remove successive D-xylose residues from the non-reducing termini.. Its pathway is glycan degradation; xylan degradation. In terms of biological role, xylan 1,4-beta-xylosidase involved in the hydrolysis of xylan, a major structural heterogeneous polysaccharide found in plant biomass representing the second most abundant polysaccharide in the biosphere, after cellulose. In Aspergillus awamori (Black koji mold), this protein is Exo-1,4-beta-xylosidase xlnD (xlnD).